Here is a 541-residue protein sequence, read N- to C-terminus: MLPFDPSTRYDRQVRLWGEEGQASIGSTSACVLGSDSLATEILKSLVLAGVQSFYVVDDAKVEQADIGQNFFLHADDIGRSRAEATLEKLTELNPSVSGSASSQPPTALAMEDVEKLTTFSVVVAANQNEEIDTTFAKVLYNIRVPFICIKTFGLIGTIRICIKEHTIANSHEENPRPDLRLDAPFSKLIEMINETNLDEMTLEQLRHTPYILLHFKALEVFRKQRNDPEAFPSTTAERKELQAILMSFRRSSEESGTKDSENFDEAKAAVIRAFQRTTIGSSVKSILSSPQCSTSTRPFWLICEALRRFVTENNNLLPLRGTLPDMTSDSSRYTRLATLFHEKALSDAQEVLRLTREVEKERGVGDVISDDVCYRFCKNADRIRVQYGDVLDYNEETKAIVEKIRESNIDEETRNQKVDEATWMLLMRAVGRFQKEKGRYPGTNGVPVSIDAQDLKKRVEVLIREALKDEQDFTSISNKVTDTAIAEICRFGAAELHVISSYVGGIAAQEIIKLATNQYVPIDNTFIFDGHTQESATFKF.

The protein belongs to the ubiquitin-activating E1 family. ULA1 subfamily. Heterodimer of uba-3 and ula-1. The complex binds NEDD8 and ubc-12.

The protein operates within protein modification; protein neddylation. Functionally, regulatory subunit of the dimeric uba-3-ula-1 E1 enzyme. E1 activates NEDD8 by first adenylating its C-terminal glycine residue with ATP, thereafter linking this residue to the side chain of the catalytic cysteine, yielding a NEDD8-rfl-1 (uba-3) thioester and free AMP. E1 finally transfers NEDD8 to the catalytic cysteine of ubc-12. Required for rfl-1 (uba-3) nuclear localization during early embryonic development. The chain is NEDD8-activating enzyme E1 regulatory subunit (ula-1) from Caenorhabditis elegans.